A 225-amino-acid polypeptide reads, in one-letter code: Ribosome maturation factor RimM (225 aa).

One can recognise a PRC barrel domain in the interval 144–225; the sequence is ADEFYWVDLI…RIVVDWEADY (82 aa).

It belongs to the RimM family. In terms of assembly, binds ribosomal protein uS19.

Its subcellular location is the cytoplasm. An accessory protein needed during the final step in the assembly of 30S ribosomal subunit, possibly for assembly of the head region. Essential for efficient processing of 16S rRNA. May be needed both before and after RbfA during the maturation of 16S rRNA. It has affinity for free ribosomal 30S subunits but not for 70S ribosomes. The sequence is that of Ribosome maturation factor RimM from Burkholderia orbicola (strain AU 1054).